The primary structure comprises 420 residues: Histidine--tRNA ligase (420 aa).

It belongs to the class-II aminoacyl-tRNA synthetase family. As to quaternary structure, homodimer.

It localises to the cytoplasm. It catalyses the reaction tRNA(His) + L-histidine + ATP = L-histidyl-tRNA(His) + AMP + diphosphate + H(+). The polypeptide is Histidine--tRNA ligase (Ureaplasma parvum serovar 3 (strain ATCC 27815 / 27 / NCTC 11736)).